A 320-amino-acid polypeptide reads, in one-letter code: Citrate synthase (320 aa).

Active-site residues include H249 and D307.

The protein belongs to the citrate synthase family.

It carries out the reaction oxaloacetate + acetyl-CoA + H2O = citrate + CoA + H(+). It functions in the pathway carbohydrate metabolism; tricarboxylic acid cycle; isocitrate from oxaloacetate: step 1/2. The sequence is that of Citrate synthase (gltA) from Bartonella doshiae.